Consider the following 83-residue polypeptide: uncharacterized protein (83 aa).

A helical membrane pass occupies residues 55-75 (FGIGAAGVLGSFVTGLLIGWV).

The protein resides in the host membrane. May play a role in phage assembly. This is an uncharacterized protein from Pseudomonas phage Pf1 (Bacteriophage Pf1).